The following is a 727-amino-acid chain: Phosphoribosylformylglycinamidine synthase subunit PurL (727 aa).

His-47 is a catalytic residue. Positions 50 and 82 each coordinate ATP. Glu-84 is a binding site for Mg(2+). Substrate is bound by residues 85 to 88 (SHNH) and Arg-107. The Proton acceptor role is filled by His-86. Asp-108 contributes to the Mg(2+) binding site. Position 229 (Gln-229) interacts with substrate. Asp-257 lines the Mg(2+) pocket. 301 to 303 (ESQ) lines the substrate pocket. Asp-486 and Gly-523 together coordinate ATP. Asn-524 serves as a coordination point for Mg(2+). A substrate-binding site is contributed by Ser-526.

It belongs to the FGAMS family. As to quaternary structure, monomer. Part of the FGAM synthase complex composed of 1 PurL, 1 PurQ and 2 PurS subunits.

It is found in the cytoplasm. It carries out the reaction N(2)-formyl-N(1)-(5-phospho-beta-D-ribosyl)glycinamide + L-glutamine + ATP + H2O = 2-formamido-N(1)-(5-O-phospho-beta-D-ribosyl)acetamidine + L-glutamate + ADP + phosphate + H(+). It participates in purine metabolism; IMP biosynthesis via de novo pathway; 5-amino-1-(5-phospho-D-ribosyl)imidazole from N(2)-formyl-N(1)-(5-phospho-D-ribosyl)glycinamide: step 1/2. Its function is as follows. Part of the phosphoribosylformylglycinamidine synthase complex involved in the purines biosynthetic pathway. Catalyzes the ATP-dependent conversion of formylglycinamide ribonucleotide (FGAR) and glutamine to yield formylglycinamidine ribonucleotide (FGAM) and glutamate. The FGAM synthase complex is composed of three subunits. PurQ produces an ammonia molecule by converting glutamine to glutamate. PurL transfers the ammonia molecule to FGAR to form FGAM in an ATP-dependent manner. PurS interacts with PurQ and PurL and is thought to assist in the transfer of the ammonia molecule from PurQ to PurL. This is Phosphoribosylformylglycinamidine synthase subunit PurL from Petrotoga mobilis (strain DSM 10674 / SJ95).